A 498-amino-acid chain; its full sequence is Lysine--tRNA ligase (498 aa).

The Mg(2+) site is built by Glu409 and Glu416.

This sequence belongs to the class-II aminoacyl-tRNA synthetase family. In terms of assembly, homodimer. Mg(2+) serves as cofactor.

It is found in the cytoplasm. The catalysed reaction is tRNA(Lys) + L-lysine + ATP = L-lysyl-tRNA(Lys) + AMP + diphosphate. This is Lysine--tRNA ligase from Coxiella burnetii (strain CbuK_Q154) (Coxiella burnetii (strain Q154)).